A 203-amino-acid polypeptide reads, in one-letter code: Transmembrane emp24 domain-containing protein (203 aa).

The N-terminal stretch at 1 to 22 (MASIRLLPSCIVLMFLARSSLC) is a signal peptide. At 23–170 (YFITIDAHGE…RSINDNTNSR (148 aa)) the chain is on the lumenal side. A GOLD domain is found at 32–114 (EECFHDKVTS…PKVLKFSMDI (83 aa)). The helical transmembrane segment at 171–191 (VVWWSFFESLVLVAMTLGQVY) threads the bilayer. Over 192 to 203 (YLKRFFEVRRVV) the chain is Cytoplasmic.

This sequence belongs to the EMP24/GP25L family.

The protein localises to the cytoplasmic vesicle membrane. In terms of biological role, could have a role in the budding of coatomer-coated and other species of coated vesicles. In Nematostella vectensis (Starlet sea anemone), this protein is Transmembrane emp24 domain-containing protein.